The chain runs to 235 residues: Ion-translocating oxidoreductase complex subunit E (235 aa).

Helical transmembrane passes span 63–83, 93–113, 117–137, 152–172, and 206–226; these read LGLS…ISLF, IPIY…LMNA, TLYQ…IIIG, IWDG…LGAL, and SFLL…LLAI.

It belongs to the NqrDE/RnfAE family. The complex is composed of six subunits: RnfA, RnfB, RnfC, RnfD, RnfE and RnfG.

It is found in the cell inner membrane. Functionally, part of a membrane-bound complex that couples electron transfer with translocation of ions across the membrane. This chain is Ion-translocating oxidoreductase complex subunit E, found in Haemophilus influenzae (strain PittEE).